Here is a 511-residue protein sequence, read N- to C-terminus: GMP synthase [glutamine-hydrolyzing] (511 aa).

A Glutamine amidotransferase type-1 domain is found at 5-195 (LILVLDFGGQ…LYKICGCSGD (191 aa)). Cys82 functions as the Nucleophile in the catalytic mechanism. Active-site residues include His169 and Glu171. The region spanning 196–386 (WKMASFIEHS…LGIPEDIVMR (191 aa)) is the GMPS ATP-PPase domain. Position 223-229 (223-229 (SGGVDSS)) interacts with ATP.

In terms of assembly, homodimer.

It catalyses the reaction XMP + L-glutamine + ATP + H2O = GMP + L-glutamate + AMP + diphosphate + 2 H(+). It functions in the pathway purine metabolism; GMP biosynthesis; GMP from XMP (L-Gln route): step 1/1. In terms of biological role, catalyzes the synthesis of GMP from XMP. The chain is GMP synthase [glutamine-hydrolyzing] from Acetivibrio thermocellus (strain ATCC 27405 / DSM 1237 / JCM 9322 / NBRC 103400 / NCIMB 10682 / NRRL B-4536 / VPI 7372) (Clostridium thermocellum).